The chain runs to 440 residues: MLETSQTIPELVNWTREREFSLSLSTERLAFLLAIAIYNNERLDGEMLETDLIDIFRHISNTFEQSAETVSTRANNSINELVKQRFLNRFSSEFTEGLSIYRLTPLGVGVSDYYIRQREFSALRLSVQLSIVADEIQRASESAEEGGDEHYWRKNVFAPLKYSVAEIFDSIDLSQRMMDENQQHIKEEIAELLTKDWQTAIASCERLLDETSGNLRELQDTLNAAGDKLQSQLLRIQDCVIGHDNLYFVEQLIVDLQAKLDRIISWGQQAIDLWIGYDRHVHKFIRTAIDLDKNRVFSQRLRQSIHHYFDHPWFLWIAQAERLIDLREEELTLREEEALGELPEELQYESLADLHEQIVETMQSLLIEYRLQNTPIDLSEVLTAQLKQYPLANHFDIARIIIDQAVRLGLAQDDLNGIYPNWRSINENGAEVQAHVIDKY.

The tract at residues 208–236 (LDETSGNLRELQDTLNAAGDKLQSQLLRI) is leucine-zipper.

Belongs to the MukF family. Interacts, and probably forms a ternary complex, with MukE and MukB via its C-terminal region. The complex formation is stimulated by calcium or magnesium. It is required for an interaction between MukE and MukB.

It localises to the cytoplasm. The protein localises to the nucleoid. Its function is as follows. Involved in chromosome condensation, segregation and cell cycle progression. May participate in facilitating chromosome segregation by condensation DNA from both sides of a centrally located replisome during cell division. Not required for mini-F plasmid partitioning. Probably acts via its interaction with MukB and MukE. Overexpression results in anucleate cells. It has a calcium binding activity. The chain is Chromosome partition protein MukF from Histophilus somni (strain 2336) (Haemophilus somnus).